A 49-amino-acid polypeptide reads, in one-letter code: Large ribosomal subunit protein bL33 (49 aa).

Belongs to the bacterial ribosomal protein bL33 family.

The polypeptide is Large ribosomal subunit protein bL33 (Alkaliphilus oremlandii (strain OhILAs) (Clostridium oremlandii (strain OhILAs))).